The primary structure comprises 179 residues: RNA polymerase sigma-E factor (179 aa).

The Polymerase core binding motif lies at 36 to 49; it reads DLLQTALVRTYGRW. The H-T-H motif DNA-binding region spans 130–149; the sequence is TEETAAALGMSAGTVKSTLH.

This sequence belongs to the sigma-70 factor family. ECF subfamily.

It localises to the cytoplasm. Its function is as follows. Sigma factors are initiation factors that promote the attachment of RNA polymerase to specific initiation sites and are then released. This sigma factor is required for normal cell wall integrity; it is recruited by RNA polymerase to transcribe genes with cell wall-related functions. The sequence is that of RNA polymerase sigma-E factor (sigE) from Streptomyces avermitilis (strain ATCC 31267 / DSM 46492 / JCM 5070 / NBRC 14893 / NCIMB 12804 / NRRL 8165 / MA-4680).